A 254-amino-acid polypeptide reads, in one-letter code: Protein Thf1 (254 aa).

Positions 183–217 (SDKLQKDLDLYRSNLEKMEQARITMEEAIQADRRK) form a coiled coil. The segment covering 213 to 227 (ADRRKREQREQEKLA) has biased composition (basic and acidic residues). The tract at residues 213-254 (ADRRKREQREQEKLAKAAAAEAPAALEASSDNPEPETSETPS) is disordered. Low complexity predominate over residues 228–240 (KAAAAEAPAALEA). Positions 245-254 (PEPETSETPS) are enriched in acidic residues.

Belongs to the THF1 family.

May be involved in photosynthetic membrane biogenesis. This chain is Protein Thf1, found in Synechococcus elongatus (strain ATCC 33912 / PCC 7942 / FACHB-805) (Anacystis nidulans R2).